Here is a 634-residue protein sequence, read N- to C-terminus: MRLSTAQLIAIAYYMLSIGATVPQVDGQGETEEALIQKRSYDYYQEPCDDYPQQQQQQEPCDYPQQQQQEEPCDYPQQQPQEPCDYPQQPQEPCDYPQQPQEPCDYPQQPQEPCDNPPQPDVPCDNPPQPDVPCDNPPQPDVPCDNPPQPDVPCDNPPQPDQPDDNPPIPNIPTDWIPNIPTDWIPDIPEKPTTPATTPNIPATTTTSESSSSSSSSSSSTTPKTSASTTPESSVPATTPNTSVPTTSSESTTPATSPESSVPVTSGSSILATTSESSSAPATTPNTSVPTTTTEAKSSSTPLTTTTEHDTTVVTVTSCSNSVCTESEVTTGVIVITSKDTIYTTYCPLTETTPVSTAPATETPTGTVSTSTEQSTTVITVTSCSESSCTESEVTTGVVVVTSEETVYTTFCPLTENTPGTDSTPEASIPPMETIPAGSEPSMPAGETSPAVPKSDVPATESAPVPEMTPAGSQPSIPAGETSPAVPKSDVSATESAPAPEMTPAGTETKPAAPKSSAPATEPSPVAPGTESAPAGPGASSSPKSSVLASETSPIAPGAETAPAGSSGAITIPESSAVVSTTEGAIPTTLESVPLMQPSANYSSVAPISTFEGAGNNMRLTFGAAIIGIAAFLI.

An N-terminal signal peptide occupies residues 1–27; it reads MRLSTAQLIAIAYYMLSIGATVPQVDG. 2 disordered regions span residues 40–307 and 412–570; these read SYDY…TTTT and CPLT…SGAI. Over residues 42 to 114 the composition is skewed to low complexity; it reads DYYQEPCDDY…DYPQQPQEPC (73 aa). Residues 46–58 form a 1; approximate repeat; sequence EPCDDYPQQQQQQ. The segment at 46 to 187 is 14 X 10 AA tandem repeats of [EVIQ]-P-[CDT]-D-[YNW]-P-[PQ]-[QI]-[QP]-[QDN]; the sequence is EPCDDYPQQQ…PNIPTDWIPD (142 aa). Residues 59-69 form a 2; approximate repeat; that stretch reads EPCDYPQQQQQ. A 3; approximate repeat occupies 70–81; the sequence is EEPCDYPQQQPQ. 9 tandem repeats follow at residues 82 to 91, 92 to 101, 102 to 111, 112 to 121, 122 to 131, 132 to 141, 142 to 151, 152 to 161, and 162 to 171. Residues 115 to 171 show a composition bias toward pro residues; sequence DNPPQPDVPCDNPPQPDVPCDNPPQPDVPCDNPPQPDVPCDNPPQPDQPDDNPPIPN. A 13; truncated repeat occupies 172 to 179; sequence IPTDWIPN. Composition is skewed to low complexity over residues 172–183 and 193–307; these read IPTDWIPNIPTD and TTPA…TTTT. Residues 180–187 form a 14; truncated repeat; the sequence is IPTDWIPD. Residues asparagine 241 and asparagine 286 are each glycosylated (N-linked (GlcNAc...) asparagine). The span at 415–426 shows a compositional bias: polar residues; sequence TENTPGTDSTPE. Low complexity predominate over residues 508-550; sequence ETKPAAPKSSAPATEPSPVAPGTESAPAGPGASSSPKSSVLAS. N-linked (GlcNAc...) asparagine glycosylation is present at asparagine 601. Glycine 613 carries the GPI-anchor amidated glycine lipid modification. Positions 614–634 are cleaved as a propeptide — removed in mature form; it reads AGNNMRLTFGAAIIGIAAFLI.

The protein belongs to the HWP1 family. Post-translationally, the GPI-anchor is attached to the protein in the endoplasmic reticulum and serves to target the protein to the cell surface. There, the glucosamine-inositol phospholipid moiety is cleaved off and the GPI-modified mannoprotein is covalently attached via its lipidless GPI glycan remnant to the 1,6-beta-glucan of the outer cell wall layer. Serves as a substrate for mammalian transglutaminases which are necessary for cross-linking between HWP1 and host epithelial cells. Also predicted to be a substrate for cleavage by KEX2. In terms of processing, N- and O-glycosylated.

It is found in the secreted. Its subcellular location is the cell wall. The protein localises to the membrane. Major hyphal cell wall protein which plays a role of adhesin and is required for mating, normal hyphal development, cell-to-cell adhesive functions necessary for biofilm integrity, attachment to host, and virulence. Promotes interactions with host and bacterial molecules, thus leading to effective colonization within polymicrobial communities. Plays a crucial role in gastrointestinal colonization, in mucosal symptomatic and asymptomatic infections, in vaginitis, as well as in lethal oroesophageal candidiasis, caused by the combined action of fungal virulence factors and host inflammatory responses when protective immunity is absent. In Candida albicans (strain SC5314 / ATCC MYA-2876) (Yeast), this protein is Hyphal wall protein 1 (HWP1).